The chain runs to 182 residues: Molybdopterin synthase catalytic subunit (182 aa).

Substrate-binding positions include 119 to 120, lysine 135, and 142 to 144; these read HR and KRE. Residues 152-182 form a disordered region; sequence VWRANRDGAPGQRIDTAEPAVGAGSGGEIDD.

Belongs to the MoaE family. MOCS2B subfamily. Heterotetramer; composed of 2 small (MOCS2A) and 2 large (MOCS2B) subunits.

It localises to the cytoplasm. The catalysed reaction is 2 [molybdopterin-synthase sulfur-carrier protein]-C-terminal-Gly-aminoethanethioate + cyclic pyranopterin phosphate + H2O = molybdopterin + 2 [molybdopterin-synthase sulfur-carrier protein]-C-terminal Gly-Gly + 2 H(+). It functions in the pathway cofactor biosynthesis; molybdopterin biosynthesis. Catalytic subunit of the molybdopterin synthase complex, a complex that catalyzes the conversion of precursor Z into molybdopterin. Acts by mediating the incorporation of 2 sulfur atoms from thiocarboxylated MOCS2A into precursor Z to generate a dithiolene group. In Pyricularia oryzae (strain 70-15 / ATCC MYA-4617 / FGSC 8958) (Rice blast fungus), this protein is Molybdopterin synthase catalytic subunit.